Reading from the N-terminus, the 353-residue chain is Uroporphyrinogen decarboxylase (353 aa).

Substrate-binding positions include 29 to 33 (RQAGR), D79, Y156, T211, and H329.

The protein belongs to the uroporphyrinogen decarboxylase family. Homodimer.

The protein localises to the cytoplasm. The catalysed reaction is uroporphyrinogen III + 4 H(+) = coproporphyrinogen III + 4 CO2. It functions in the pathway porphyrin-containing compound metabolism; protoporphyrin-IX biosynthesis; coproporphyrinogen-III from 5-aminolevulinate: step 4/4. Catalyzes the decarboxylation of four acetate groups of uroporphyrinogen-III to yield coproporphyrinogen-III. The chain is Uroporphyrinogen decarboxylase from Alcanivorax borkumensis (strain ATCC 700651 / DSM 11573 / NCIMB 13689 / SK2).